Reading from the N-terminus, the 591-residue chain is Aspartate--tRNA(Asp/Asn) ligase (591 aa).

Position 174 (glutamate 174) interacts with L-aspartate. Positions 198–201 (QLFK) are aspartate. Arginine 220 contacts L-aspartate. ATP is bound by residues 220–222 (RDE) and glutamine 229. Histidine 450 serves as a coordination point for L-aspartate. Glutamate 483 lines the ATP pocket. Arginine 490 is a binding site for L-aspartate. 535–538 (GLDR) contacts ATP.

It belongs to the class-II aminoacyl-tRNA synthetase family. Type 1 subfamily. As to quaternary structure, homodimer.

The protein resides in the cytoplasm. It carries out the reaction tRNA(Asx) + L-aspartate + ATP = L-aspartyl-tRNA(Asx) + AMP + diphosphate. Aspartyl-tRNA synthetase with relaxed tRNA specificity since it is able to aspartylate not only its cognate tRNA(Asp) but also tRNA(Asn). Reaction proceeds in two steps: L-aspartate is first activated by ATP to form Asp-AMP and then transferred to the acceptor end of tRNA(Asp/Asn). The chain is Aspartate--tRNA(Asp/Asn) ligase from Pseudomonas fluorescens (strain Pf0-1).